A 33-amino-acid polypeptide reads, in one-letter code: Suppressor protein HFN40 (33 aa).

In terms of biological role, suppresses expansion of husk leaf blades. The protein is Suppressor protein HFN40 of Zea mays (Maize).